Consider the following 63-residue polypeptide: Sec-independent protein translocase protein TatA (63 aa).

Residues 1–21 form a helical membrane-spanning segment; it reads MGSFSMWHWLIVLVIVLLLFG. Residues 42 to 63 form a disordered region; the sequence is GMTDDDAPDTAKTVDHKADETK. Residues 53–63 show a composition bias toward basic and acidic residues; that stretch reads KTVDHKADETK.

Belongs to the TatA/E family. In terms of assembly, the Tat system comprises two distinct complexes: a TatABC complex, containing multiple copies of TatA, TatB and TatC subunits, and a separate TatA complex, containing only TatA subunits. Substrates initially bind to the TatABC complex, which probably triggers association of the separate TatA complex to form the active translocon.

The protein localises to the cell inner membrane. Part of the twin-arginine translocation (Tat) system that transports large folded proteins containing a characteristic twin-arginine motif in their signal peptide across membranes. TatA could form the protein-conducting channel of the Tat system. This chain is Sec-independent protein translocase protein TatA, found in Rhizobium etli (strain CIAT 652).